The following is a 217-amino-acid chain: tRNA (guanine-N(7)-)-methyltransferase (217 aa).

The S-adenosyl-L-methionine site is built by E44, E69, D96, and D118. D118 is a catalytic residue. Residues K122, D154, and 191–194 (TEYE) contribute to the substrate site.

Belongs to the class I-like SAM-binding methyltransferase superfamily. TrmB family.

It catalyses the reaction guanosine(46) in tRNA + S-adenosyl-L-methionine = N(7)-methylguanosine(46) in tRNA + S-adenosyl-L-homocysteine. The protein operates within tRNA modification; N(7)-methylguanine-tRNA biosynthesis. Catalyzes the formation of N(7)-methylguanine at position 46 (m7G46) in tRNA. This Bacillus cereus (strain G9842) protein is tRNA (guanine-N(7)-)-methyltransferase.